A 60-amino-acid polypeptide reads, in one-letter code: Large ribosomal subunit protein bL33 (60 aa).

Belongs to the bacterial ribosomal protein bL33 family.

This chain is Large ribosomal subunit protein bL33, found in Chlorobaculum tepidum (strain ATCC 49652 / DSM 12025 / NBRC 103806 / TLS) (Chlorobium tepidum).